The sequence spans 160 residues: Phosphopantetheine adenylyltransferase (160 aa).

Ser-8 is a binding site for substrate. ATP contacts are provided by residues 8–9 (SF) and His-16. Substrate contacts are provided by Lys-40, Leu-73, and Lys-87. ATP-binding positions include 88–90 (GLR), Glu-98, and 122–128 (YGYVSST).

This sequence belongs to the bacterial CoaD family. In terms of assembly, homohexamer. Mg(2+) is required as a cofactor.

The protein resides in the cytoplasm. The catalysed reaction is (R)-4'-phosphopantetheine + ATP + H(+) = 3'-dephospho-CoA + diphosphate. It participates in cofactor biosynthesis; coenzyme A biosynthesis; CoA from (R)-pantothenate: step 4/5. Reversibly transfers an adenylyl group from ATP to 4'-phosphopantetheine, yielding dephospho-CoA (dPCoA) and pyrophosphate. The chain is Phosphopantetheine adenylyltransferase from Corynebacterium glutamicum (strain R).